The chain runs to 113 residues: Protein translation factor SUI1 homolog (113 aa).

Belongs to the SUI1 family.

In terms of biological role, probably involved in translation. The protein is Protein translation factor SUI1 homolog of Spuriopimpinella brachycarpa (Chamnamul).